Reading from the N-terminus, the 588-residue chain is Arginine--tRNA ligase (588 aa).

Residues 129 to 139 (PNIAKEMHVGH) carry the 'HIGH' region motif.

Belongs to the class-I aminoacyl-tRNA synthetase family. As to quaternary structure, monomer.

Its subcellular location is the cytoplasm. It carries out the reaction tRNA(Arg) + L-arginine + ATP = L-arginyl-tRNA(Arg) + AMP + diphosphate. In Frankia casuarinae (strain DSM 45818 / CECT 9043 / HFP020203 / CcI3), this protein is Arginine--tRNA ligase.